Here is a 346-residue protein sequence, read N- to C-terminus: Heat-inducible transcription repressor HrcA (346 aa).

Belongs to the HrcA family.

In terms of biological role, negative regulator of class I heat shock genes (grpE-dnaK-dnaJ and groELS operons). Prevents heat-shock induction of these operons. This is Heat-inducible transcription repressor HrcA from Fructilactobacillus sanfranciscensis (Lactobacillus sanfranciscensis).